The following is a 310-amino-acid chain: Homoserine kinase (310 aa).

91 to 101 (PIGSGLGSSAC) provides a ligand contact to ATP.

The protein belongs to the GHMP kinase family. Homoserine kinase subfamily.

It localises to the cytoplasm. It catalyses the reaction L-homoserine + ATP = O-phospho-L-homoserine + ADP + H(+). The protein operates within amino-acid biosynthesis; L-threonine biosynthesis; L-threonine from L-aspartate: step 4/5. Catalyzes the ATP-dependent phosphorylation of L-homoserine to L-homoserine phosphate. The protein is Homoserine kinase of Shigella flexneri serotype 5b (strain 8401).